The sequence spans 177 residues: Dual-action ribosomal maturation protein DarP (177 aa).

The protein belongs to the DarP family.

It localises to the cytoplasm. Functionally, member of a network of 50S ribosomal subunit biogenesis factors which assembles along the 30S-50S interface, preventing incorrect 23S rRNA structures from forming. Promotes peptidyl transferase center (PTC) maturation. In Glaesserella parasuis serovar 5 (strain SH0165) (Haemophilus parasuis), this protein is Dual-action ribosomal maturation protein DarP.